Reading from the N-terminus, the 881-residue chain is Protein P (881 aa).

The tract at residues M1–Q184 is terminal protein domain (TP). The segment at L185–I384 is spacer. Residues I263 to S351 form a disordered region. Polar residues-rich tracts occupy residues P270–R279 and N287–G314. Residues F326–R340 show a composition bias toward basic and acidic residues. A polymerase/reverse transcriptase domain (RT) region spans residues D385–Q726. A Reverse transcriptase domain is found at D395–I636. Residues D467, D587, and D588 each contribute to the Mg(2+) site.

Belongs to the hepadnaviridae P protein family.

It catalyses the reaction DNA(n) + a 2'-deoxyribonucleoside 5'-triphosphate = DNA(n+1) + diphosphate. It carries out the reaction Endonucleolytic cleavage to 5'-phosphomonoester.. With respect to regulation, activated by host HSP70 and HSP40 in vitro to be able to bind the epsilon loop of the pgRNA. Because deletion of the RNase H region renders the protein partly chaperone-independent, the chaperones may be needed indirectly to relieve occlusion of the RNA-binding site by this domain. Inhibited by several reverse-transcriptase inhibitors: Lamivudine, Adefovir and Entecavir. Multifunctional enzyme that converts the viral RNA genome into dsDNA in viral cytoplasmic capsids. This enzyme displays a DNA polymerase activity that can copy either DNA or RNA templates, and a ribonuclease H (RNase H) activity that cleaves the RNA strand of RNA-DNA heteroduplexes in a partially processive 3'- to 5'-endonucleasic mode. Neo-synthesized pregenomic RNA (pgRNA) are encapsidated together with the P protein, and reverse-transcribed inside the nucleocapsid. Initiation of reverse-transcription occurs first by binding the epsilon loop on the pgRNA genome, and is initiated by protein priming, thereby the 5'-end of (-)DNA is covalently linked to P protein. Partial (+)DNA is synthesized from the (-)DNA template and generates the relaxed circular DNA (RC-DNA) genome. After budding and infection, the RC-DNA migrates in the nucleus, and is converted into a plasmid-like covalently closed circular DNA (cccDNA). The activity of P protein does not seem to be necessary for cccDNA generation, and is presumably released from (+)DNA by host nuclear DNA repair machinery. The chain is Protein P from Ground squirrel hepatitis virus (strain 27) (GSHV).